Here is a 739-residue protein sequence, read N- to C-terminus: Catalase-peroxidase (739 aa).

An N-terminal signal peptide occupies residues 1 to 23 (MLKKIVTALGMSGMLLAANSAIA). The tryptophyl-tyrosyl-methioninium (Trp-Tyr) (with M-247) cross-link spans 100-221 (WHDAGTYRLA…YAATQMGLIY (122 aa)). His-101 acts as the Proton acceptor in catalysis. Positions 221 to 247 (YVNPEGPDGKPDIKGAASEIRQAFRAM) form a cross-link, tryptophyl-tyrosyl-methioninium (Tyr-Met) (with W-100). Residue His-262 participates in heme b binding.

It belongs to the peroxidase family. Peroxidase/catalase subfamily. As to quaternary structure, homodimer or homotetramer. Requires heme b as cofactor. Post-translationally, formation of the three residue Trp-Tyr-Met cross-link is important for the catalase, but not the peroxidase activity of the enzyme.

It carries out the reaction H2O2 + AH2 = A + 2 H2O. It catalyses the reaction 2 H2O2 = O2 + 2 H2O. Functionally, bifunctional enzyme with both catalase and broad-spectrum peroxidase activity. This Francisella philomiragia subsp. philomiragia (strain ATCC 25017 / CCUG 19701 / FSC 153 / O#319-036) protein is Catalase-peroxidase.